A 180-amino-acid chain; its full sequence is Large ribosomal subunit protein uL6 (180 aa).

This sequence belongs to the universal ribosomal protein uL6 family. As to quaternary structure, part of the 50S ribosomal subunit.

Its function is as follows. This protein binds to the 23S rRNA, and is important in its secondary structure. It is located near the subunit interface in the base of the L7/L12 stalk, and near the tRNA binding site of the peptidyltransferase center. The polypeptide is Large ribosomal subunit protein uL6 (Clostridium botulinum (strain Okra / Type B1)).